An 83-amino-acid chain; its full sequence is Exodeoxyribonuclease 7 small subunit (83 aa).

The protein belongs to the XseB family. As to quaternary structure, heterooligomer composed of large and small subunits.

It localises to the cytoplasm. The catalysed reaction is Exonucleolytic cleavage in either 5'- to 3'- or 3'- to 5'-direction to yield nucleoside 5'-phosphates.. In terms of biological role, bidirectionally degrades single-stranded DNA into large acid-insoluble oligonucleotides, which are then degraded further into small acid-soluble oligonucleotides. The chain is Exodeoxyribonuclease 7 small subunit from Rhodopseudomonas palustris (strain ATCC BAA-98 / CGA009).